Here is a 337-residue protein sequence, read N- to C-terminus: tRNA N6-adenosine threonylcarbamoyltransferase (337 aa).

Positions 111 and 115 each coordinate Fe cation. Substrate-binding positions include 134–138 (LVSGG), D167, G180, and N272. D300 serves as a coordination point for Fe cation.

Belongs to the KAE1 / TsaD family. The cofactor is Fe(2+).

The protein localises to the cytoplasm. The enzyme catalyses L-threonylcarbamoyladenylate + adenosine(37) in tRNA = N(6)-L-threonylcarbamoyladenosine(37) in tRNA + AMP + H(+). Functionally, required for the formation of a threonylcarbamoyl group on adenosine at position 37 (t(6)A37) in tRNAs that read codons beginning with adenine. Is involved in the transfer of the threonylcarbamoyl moiety of threonylcarbamoyl-AMP (TC-AMP) to the N6 group of A37, together with TsaE and TsaB. TsaD likely plays a direct catalytic role in this reaction. This chain is tRNA N6-adenosine threonylcarbamoyltransferase, found in Escherichia coli O139:H28 (strain E24377A / ETEC).